We begin with the raw amino-acid sequence, 653 residues long: ATP-dependent zinc metalloprotease FtsH 1 (653 aa).

Residues 1-8 (MAENKWLR) lie on the Cytoplasmic side of the membrane. Residues 9 to 29 (NGFVWIVLIIAVVALWVTFMK) form a helical membrane-spanning segment. Topologically, residues 30 to 110 (DGGSAREENF…RVNPASQWGN (81 aa)) are extracellular. Residues 111-131 (WLSALTFILPTLFLIGIVIFM) form a helical membrane-spanning segment. Residues 132–653 (MRQAQGTNNQ…SPTMRPQPAS (522 aa)) are Cytoplasmic-facing. Residue 203–210 (GPPGTGKT) coordinates ATP. His425 contributes to the Zn(2+) binding site. Glu426 is a catalytic residue. Residues His429 and Asp501 each contribute to the Zn(2+) site. Positions 604–653 (EPRPRPQLVGPPVTRPAALAHKTEEADRGGERSPHPQPHPSPTMRPQPAS) are disordered. Residues 624 to 637 (HKTEEADRGGERSP) show a composition bias toward basic and acidic residues. Pro residues predominate over residues 638-653 (HPQPHPSPTMRPQPAS).

In the central section; belongs to the AAA ATPase family. It in the C-terminal section; belongs to the peptidase M41 family. As to quaternary structure, homohexamer. It depends on Zn(2+) as a cofactor.

Its subcellular location is the cell membrane. Acts as a processive, ATP-dependent zinc metallopeptidase for both cytoplasmic and membrane proteins. Plays a role in the quality control of integral membrane proteins. The polypeptide is ATP-dependent zinc metalloprotease FtsH 1 (Sphaerobacter thermophilus (strain ATCC 49802 / DSM 20745 / KCCM 41009 / NCIMB 13125 / S 6022)).